Here is a 242-residue protein sequence, read N- to C-terminus: N-alpha-acetyltransferase 60 (242 aa).

Residues 1–192 (MSEEERPAAL…GGHPPWTVMD (192 aa)) lie on the Cytoplasmic side of the membrane. In terms of domain architecture, N-acetyltransferase spans 13-182 (TILRFLCHDD…DAYTYVLYLN (170 aa)). Y38 is a binding site for substrate. Residue Y97 is part of the active site. Substrate is bound at residue L99. Acetyl-CoA-binding positions include 101–103 (LGV) and 109–114 (KQGIGS). The active site involves H138. Residues N143 and 150 to 153 (YENR) contribute to the acetyl-CoA site. Residues 162-173 (PYYYSIRGVLQD) form a required for homodimerization region. Y165 serves as a coordination point for substrate. Residues 193–236 (YLQHLGSALAGFSPCTLPQRIYRQAHTLLRSLLPWSSISAKSGI) constitute an intramembrane region (helical). Topologically, residues 237–242 (EYSRTM) are cytoplasmic.

The protein belongs to the acetyltransferase family. NAA60 subfamily. Monomer and homodimer; monomer in presence of substrate and homodimer in its absence.

It is found in the golgi apparatus membrane. The enzyme catalyses N-terminal L-methionyl-[transmembrane protein] + acetyl-CoA = N-terminal N(alpha)-acetyl-L-methionyl-[transmembrane protein] + CoA + H(+). It catalyses the reaction L-lysyl-[protein] + acetyl-CoA = N(6)-acetyl-L-lysyl-[protein] + CoA + H(+). N-alpha-acetyltransferase that specifically mediates the acetylation of N-terminal residues of the transmembrane proteins, with a strong preference for N-termini facing the cytosol. Displays N-terminal acetyltransferase activity towards a range of N-terminal sequences including those starting with Met-Lys, Met-Val, Met-Ala and Met-Met. Required for normal chromosomal segregation during anaphase. May also show histone acetyltransferase activity; such results are however unclear in vivo and would require additional experimental evidences. The polypeptide is N-alpha-acetyltransferase 60 (naa60) (Xenopus tropicalis (Western clawed frog)).